The primary structure comprises 103 residues: Pseudonajatoxin b homolog (103 aa).

The signal sequence occupies residues 1 to 21 (MKTLLLTLVVVTIVCLDLGYT). Cystine bridges form between C24/C42, C35/C63, C48/C52, C67/C79, and C80/C85.

Belongs to the three-finger toxin family. Long-chain subfamily. Type II alpha-neurotoxin sub-subfamily. In terms of tissue distribution, expressed by the venom gland.

The protein localises to the secreted. In terms of biological role, binds with high affinity to muscular (alpha-1/CHRNA1) and neuronal (alpha-7/CHRNA7) nicotinic acetylcholine receptor (nAChR) and inhibits acetylcholine from binding to the receptor, thereby impairing neuromuscular and neuronal transmission. The protein is Pseudonajatoxin b homolog of Pseudonaja textilis (Eastern brown snake).